The chain runs to 559 residues: Cation/calcium exchanger 2 (559 aa).

The next 13 membrane-spanning stretches (helical) occupy residues Phe10–Thr30, Gly86–Leu106, Val131–Val151, Thr167–Leu187, Ile203–Asn223, Phe224–Ser244, Trp331–Trp351, Ala362–Ala382, Trp393–Ala413, Leu416–Leu436, Phe480–Ile500, Leu506–Ser526, and Leu531–Ile551.

The protein belongs to the Ca(2+):cation antiporter (CaCA) (TC 2.A.19) family. Cation/calcium exchanger (CCX) subfamily.

Its subcellular location is the membrane. Membrane-localized H(+)-dependent K(+) and Na(+) transporter. The polypeptide is Cation/calcium exchanger 2 (CCX2) (Arabidopsis thaliana (Mouse-ear cress)).